Reading from the N-terminus, the 181-residue chain is Dual-action ribosomal maturation protein DarP (181 aa).

Residues 1-23 (MTGIKKPMSQYQDDNELEDWGPS) form a disordered region.

The protein belongs to the DarP family.

It is found in the cytoplasm. Its function is as follows. Member of a network of 50S ribosomal subunit biogenesis factors which assembles along the 30S-50S interface, preventing incorrect 23S rRNA structures from forming. Promotes peptidyl transferase center (PTC) maturation. The sequence is that of Dual-action ribosomal maturation protein DarP from Aeromonas salmonicida (strain A449).